The following is a 329-amino-acid chain: Cathepsin K (329 aa).

A signal peptide spans 1 to 15; that stretch reads MWGLKVLLLPVVSFA. The propeptide at 16 to 114 is activation peptide; that stretch reads LYPEEILDTH…TLYIPEWEGR (99 aa). N-linked (GlcNAc...) asparagine glycosylation occurs at Asn103. 3 disulfides stabilise this stretch: Cys136-Cys177, Cys170-Cys210, and Cys269-Cys318. Cys139 is an active-site residue. Catalysis depends on residues His276 and Asn296.

The protein belongs to the peptidase C1 family. As to expression, predominantly expressed in osteoclasts (bones). Expressed in thyroid epithelial cells.

Its subcellular location is the lysosome. The protein resides in the secreted. It localises to the apical cell membrane. It catalyses the reaction Broad proteolytic activity. With small-molecule substrates and inhibitors, the major determinant of specificity is P2, which is preferably Leu, Met &gt; Phe, and not Arg.. Thiol protease involved in osteoclastic bone resorption and may participate partially in the disorder of bone remodeling. Displays potent endoprotease activity against fibrinogen at acid pH. May play an important role in extracellular matrix degradation. Involved in the release of thyroid hormone thyroxine (T4) by limited proteolysis of TG/thyroglobulin in the thyroid follicle lumen. The polypeptide is Cathepsin K (CTSK) (Homo sapiens (Human)).